The chain runs to 582 residues: Threonine--tRNA ligase (582 aa).

Residues 185 to 478 are catalytic; it reads DHRKLGKELD…LVEHYGGAFP (294 aa). The Zn(2+) site is built by C278, H329, and H455.

Belongs to the class-II aminoacyl-tRNA synthetase family. Homodimer. The cofactor is Zn(2+).

It is found in the cytoplasm. It catalyses the reaction tRNA(Thr) + L-threonine + ATP = L-threonyl-tRNA(Thr) + AMP + diphosphate + H(+). Catalyzes the attachment of threonine to tRNA(Thr) in a two-step reaction: L-threonine is first activated by ATP to form Thr-AMP and then transferred to the acceptor end of tRNA(Thr). Also edits incorrectly charged L-seryl-tRNA(Thr). In Borrelia garinii subsp. bavariensis (strain ATCC BAA-2496 / DSM 23469 / PBi) (Borreliella bavariensis), this protein is Threonine--tRNA ligase.